The following is a 444-amino-acid chain: Tol-Pal system protein TolB (444 aa).

An N-terminal signal peptide occupies residues 1–19 (MRNIIYFILSLLFSVTSYA).

The protein belongs to the TolB family. As to quaternary structure, the Tol-Pal system is composed of five core proteins: the inner membrane proteins TolA, TolQ and TolR, the periplasmic protein TolB and the outer membrane protein Pal. They form a network linking the inner and outer membranes and the peptidoglycan layer.

It is found in the periplasm. Part of the Tol-Pal system, which plays a role in outer membrane invagination during cell division and is important for maintaining outer membrane integrity. This Rickettsia africae (strain ESF-5) protein is Tol-Pal system protein TolB.